The primary structure comprises 61 residues: Small ribosomal subunit protein uS14 (61 aa).

4 residues coordinate Zn(2+): cysteine 24, cysteine 27, cysteine 40, and cysteine 43.

It belongs to the universal ribosomal protein uS14 family. Zinc-binding uS14 subfamily. Part of the 30S ribosomal subunit. Contacts proteins S3 and S10. Zn(2+) serves as cofactor.

Functionally, binds 16S rRNA, required for the assembly of 30S particles and may also be responsible for determining the conformation of the 16S rRNA at the A site. In Desulfitobacterium hafniense (strain Y51), this protein is Small ribosomal subunit protein uS14.